Reading from the N-terminus, the 336-residue chain is Holliday junction branch migration complex subunit RuvB (336 aa).

The large ATPase domain (RuvB-L) stretch occupies residues 4–184 (ADRLISASGG…FGIVQRLEFY (181 aa)). ATP is bound by residues isoleucine 23, arginine 24, glycine 65, lysine 68, threonine 69, threonine 70, 131–133 (EDY), arginine 174, tyrosine 184, and arginine 221. Residue threonine 69 coordinates Mg(2+). The interval 185–255 (NVKDLTDIVA…IAARAMDMLD (71 aa)) is small ATPAse domain (RuvB-S). The head domain (RuvB-H) stretch occupies residues 258-336 (NEGFDFMDRK…HFGLQRPDEG (79 aa)). Residues arginine 313 and arginine 318 each contribute to the DNA site.

Belongs to the RuvB family. In terms of assembly, homohexamer. Forms an RuvA(8)-RuvB(12)-Holliday junction (HJ) complex. HJ DNA is sandwiched between 2 RuvA tetramers; dsDNA enters through RuvA and exits via RuvB. An RuvB hexamer assembles on each DNA strand where it exits the tetramer. Each RuvB hexamer is contacted by two RuvA subunits (via domain III) on 2 adjacent RuvB subunits; this complex drives branch migration. In the full resolvosome a probable DNA-RuvA(4)-RuvB(12)-RuvC(2) complex forms which resolves the HJ.

It is found in the cytoplasm. The enzyme catalyses ATP + H2O = ADP + phosphate + H(+). In terms of biological role, the RuvA-RuvB-RuvC complex processes Holliday junction (HJ) DNA during genetic recombination and DNA repair, while the RuvA-RuvB complex plays an important role in the rescue of blocked DNA replication forks via replication fork reversal (RFR). RuvA specifically binds to HJ cruciform DNA, conferring on it an open structure. The RuvB hexamer acts as an ATP-dependent pump, pulling dsDNA into and through the RuvAB complex. RuvB forms 2 homohexamers on either side of HJ DNA bound by 1 or 2 RuvA tetramers; 4 subunits per hexamer contact DNA at a time. Coordinated motions by a converter formed by DNA-disengaged RuvB subunits stimulates ATP hydrolysis and nucleotide exchange. Immobilization of the converter enables RuvB to convert the ATP-contained energy into a lever motion, pulling 2 nucleotides of DNA out of the RuvA tetramer per ATP hydrolyzed, thus driving DNA branch migration. The RuvB motors rotate together with the DNA substrate, which together with the progressing nucleotide cycle form the mechanistic basis for DNA recombination by continuous HJ branch migration. Branch migration allows RuvC to scan DNA until it finds its consensus sequence, where it cleaves and resolves cruciform DNA. The chain is Holliday junction branch migration complex subunit RuvB from Aeromonas hydrophila subsp. hydrophila (strain ATCC 7966 / DSM 30187 / BCRC 13018 / CCUG 14551 / JCM 1027 / KCTC 2358 / NCIMB 9240 / NCTC 8049).